The chain runs to 376 residues: Protein RecA (376 aa).

Residue 79-86 coordinates ATP; the sequence is GPESSGKT. A disordered region spans residues 357–376; the sequence is AAARAATDKPVETKGANAAA.

This sequence belongs to the RecA family.

It localises to the cytoplasm. In terms of biological role, can catalyze the hydrolysis of ATP in the presence of single-stranded DNA, the ATP-dependent uptake of single-stranded DNA by duplex DNA, and the ATP-dependent hybridization of homologous single-stranded DNAs. It interacts with LexA causing its activation and leading to its autocatalytic cleavage. The protein is Protein RecA of Synechococcus sp. (strain CC9902).